Reading from the N-terminus, the 240-residue chain is Biosynthetic peptidoglycan transglycosylase (240 aa).

The chain crosses the membrane as a helical span at residues 9–31 (FLNVVKWFAIASVLLVLLFRVVP).

The protein belongs to the glycosyltransferase 51 family.

The protein resides in the cell inner membrane. The catalysed reaction is [GlcNAc-(1-&gt;4)-Mur2Ac(oyl-L-Ala-gamma-D-Glu-L-Lys-D-Ala-D-Ala)](n)-di-trans,octa-cis-undecaprenyl diphosphate + beta-D-GlcNAc-(1-&gt;4)-Mur2Ac(oyl-L-Ala-gamma-D-Glu-L-Lys-D-Ala-D-Ala)-di-trans,octa-cis-undecaprenyl diphosphate = [GlcNAc-(1-&gt;4)-Mur2Ac(oyl-L-Ala-gamma-D-Glu-L-Lys-D-Ala-D-Ala)](n+1)-di-trans,octa-cis-undecaprenyl diphosphate + di-trans,octa-cis-undecaprenyl diphosphate + H(+). Its pathway is cell wall biogenesis; peptidoglycan biosynthesis. Functionally, peptidoglycan polymerase that catalyzes glycan chain elongation from lipid-linked precursors. The sequence is that of Biosynthetic peptidoglycan transglycosylase from Pseudomonas fluorescens (strain SBW25).